The primary structure comprises 368 residues: DNA replication and repair protein RecF (368 aa).

Residue Gly30–Thr37 participates in ATP binding.

This sequence belongs to the RecF family.

Its subcellular location is the cytoplasm. In terms of biological role, the RecF protein is involved in DNA metabolism; it is required for DNA replication and normal SOS inducibility. RecF binds preferentially to single-stranded, linear DNA. It also seems to bind ATP. In Streptococcus pyogenes serotype M12 (strain MGAS2096), this protein is DNA replication and repair protein RecF.